Reading from the N-terminus, the 472-residue chain is Cannabinoid receptor 1 (472 aa).

Residues 1 to 116 are Extracellular-facing; the sequence is MKSILDGLAD…CFMVLNPSQQ (116 aa). The interval 2–23 is required for mitochondrial localization; it reads KSILDGLADTTFRTITTDLLYV. N-linked (GlcNAc...) asparagine glycans are attached at residues asparagine 77 and asparagine 83. Residues 117 to 142 traverse the membrane as a helical segment; that stretch reads LAIAVLSLTLGTFTVLENLLVLCVIL. Residues 143 to 154 lie on the Cytoplasmic side of the membrane; it reads HSRSLRCRPSYH. The helical transmembrane segment at 155-175 threads the bilayer; it reads FIGSLAVADLLGSVIFVYSFI. At 176 to 187 the chain is on the extracellular side; sequence DFHVFHRKDSRN. A helical membrane pass occupies residues 188 to 212; that stretch reads VFLFKLGGVTASFTASVGSLFLTAI. The Cytoplasmic portion of the chain corresponds to 213–232; it reads DRYISIHRPLAYKRIVTRPK. A helical transmembrane segment spans residues 233–255; it reads AVVAFCLMWTIAIVIAVLPLLGW. The Extracellular segment spans residues 256–273; that stretch reads NCEKLQSVCSDIFPHIDE. Residues 274 to 299 traverse the membrane as a helical segment; that stretch reads TYLMFWIGVTSVLLLFIVYAYMYILW. Residues 300-344 are Cytoplasmic-facing; it reads KAHSHAVRMIQRGTQKSIIIHTSEDGKVQVTRPDQARMDIRLAKT. The chain crosses the membrane as a helical span at residues 345 to 365; that stretch reads LVLILVVLIICWGPLLAIMVY. Over 366–377 the chain is Extracellular; the sequence is DVFGKMNKLIKT. The helical transmembrane segment at 378-399 threads the bilayer; that stretch reads VFAFCSMLCLLNSTVNPIIYAL. The Cytoplasmic segment spans residues 400 to 472; the sequence is RSKDLRHAFR…VSTDTSAEAL (73 aa). The S-palmitoyl cysteine moiety is linked to residue cysteine 415. Serine 425 and serine 429 each carry phosphoserine.

This sequence belongs to the G-protein coupled receptor 1 family. Interacts (via C-terminus) with CNRIP1; this interaction attenuates constitutive, but not agonist-dependent, inhibition of voltage-gated Ca(2+) channels in neurons. Associates with G protein alpha subunits, including G(i) alpha-1/GNAI1, G(i) alpha-3/GNAI3 and G(o)-alpha/GNAO1; palmitoylation is important for interaction with GNAI3 and GNAO1. Palmitoylation at Cys-415 is important for recruitment at plasma membrane and lipid rafts and association with G protein alpha subunits. Widely expressed, with highest levels in fetal and adult brain. Expression levels of isoform 2 and isoform 3 are much lower than those of isoform 1.

The protein localises to the cell membrane. The protein resides in the membrane raft. Its subcellular location is the mitochondrion outer membrane. It is found in the cell projection. It localises to the axon. The protein localises to the presynapse. Its activity is regulated as follows. Hemopressin, a peptide derived from hemoglobin subunit alpha (HBA1 and/or HBA2), acts as an antagonist peptide: hemopressin-binding efficiently blocks cannabinoid receptor CNR1 and subsequent signaling. G-protein coupled receptor for endogenous cannabinoids (eCBs), including N-arachidonoylethanolamide (also called anandamide or AEA) and 2-arachidonoylglycerol (2-AG), as well as phytocannabinoids, such as delta(9)-tetrahydrocannabinol (THC). Mediates many cannabinoid-induced effects, acting, among others, on food intake, memory loss, gastrointestinal motility, catalepsy, ambulatory activity, anxiety, chronic pain. Signaling typically involves reduction in cyclic AMP. In the hypothalamus, may have a dual effect on mitochondrial respiration depending upon the agonist dose and possibly upon the cell type. Increases respiration at low doses, while decreases respiration at high doses. At high doses, CNR1 signal transduction involves G-protein alpha-i protein activation and subsequent inhibition of mitochondrial soluble adenylate cyclase, decrease in cyclic AMP concentration, inhibition of protein kinase A (PKA)-dependent phosphorylation of specific subunits of the mitochondrial electron transport system, including NDUFS2. In the hypothalamus, inhibits leptin-induced reactive oxygen species (ROS) formation and mediates cannabinoid-induced increase in SREBF1 and FASN gene expression. In response to cannabinoids, drives the release of orexigenic beta-endorphin, but not that of melanocyte-stimulating hormone alpha/alpha-MSH, from hypothalamic POMC neurons, hence promoting food intake. In the hippocampus, regulates cellular respiration and energy production in response to cannabinoids. Involved in cannabinoid-dependent depolarization-induced suppression of inhibition (DSI), a process in which depolarization of CA1 postsynaptic pyramidal neurons mobilizes eCBs, which retrogradely activate presynaptic CB1 receptors, transiently decreasing GABAergic inhibitory neurotransmission. Also reduces excitatory synaptic transmission. In superior cervical ganglions and cerebral vascular smooth muscle cells, inhibits voltage-gated Ca(2+) channels in a constitutive, as well as agonist-dependent manner. In cerebral vascular smooth muscle cells, cannabinoid-induced inhibition of voltage-gated Ca(2+) channels leads to vasodilation and decreased vascular tone. Induces leptin production in adipocytes and reduces LRP2-mediated leptin clearance in the kidney, hence participating in hyperleptinemia. In adipose tissue, CNR1 signaling leads to increased expression of SREBF1, ACACA and FASN genes. In the liver, activation by endocannabinoids leads to increased de novo lipogenesis and reduced fatty acid catabolism, associated with increased expression of SREBF1/SREBP-1, GCK, ACACA, ACACB and FASN genes. May also affect de novo cholesterol synthesis and HDL-cholesteryl ether uptake. Peripherally modulates energy metabolism. In high carbohydrate diet-induced obesity, may decrease the expression of mitochondrial dihydrolipoyl dehydrogenase/DLD in striated muscles, as well as that of selected glucose/ pyruvate metabolic enzymes, hence affecting energy expenditure through mitochondrial metabolism. In response to cannabinoid anandamide, elicits a pro-inflammatory response in macrophages, which involves NLRP3 inflammasome activation and IL1B and IL18 secretion. In macrophages infiltrating pancreatic islets, this process may participate in the progression of type-2 diabetes and associated loss of pancreatic beta-cells. Functionally, binds both 2-arachidonoylglycerol (2-AG) and anandamide. Its function is as follows. Only binds 2-arachidonoylglycerol (2-AG) with high affinity. Contrary to its effect on isoform 1, 2-AG behaves as an inverse agonist on isoform 2 in assays measuring GTP binding to membranes. In terms of biological role, only binds 2-arachidonoylglycerol (2-AG) with high affinity. Contrary to its effect on isoform 1, 2-AG behaves as an inverse agonist on isoform 3 in assays measuring GTP binding to membranes. This is Cannabinoid receptor 1 (CNR1) from Homo sapiens (Human).